Consider the following 414-residue polypeptide: uncharacterized protein (414 aa).

Residues 367-384 (TTWALTLICIACILLFFV) traverse the membrane as a helical segment.

It localises to the virion membrane. This is an uncharacterized protein from Human cytomegalovirus (strain Merlin) (HHV-5).